Here is a 213-residue protein sequence, read N- to C-terminus: Putative thymidylate kinase 251L (213 aa).

21 to 28 (GCDKTGKS) provides a ligand contact to ATP.

It belongs to the thymidylate kinase family.

The enzyme catalyses dTMP + ATP = dTDP + ADP. Its pathway is pyrimidine metabolism; dTTP biosynthesis. Its function is as follows. Catalyzes the conversion of dTMP to dTDP. This Acheta domesticus (House cricket) protein is Putative thymidylate kinase 251L.